The primary structure comprises 133 residues: Ubiquitin-like FUBI-ribosomal protein eS30 fusion protein (133 aa).

The Ubiquitin-like domain occupies 1–74 (MQLFVRAQEL…LEVAGRMLGG (74 aa)). The disordered stretch occupies residues 84–110 (GKVRGQTPKVAKQEKKKKKTGRAKRRM). Residues 97-110 (EKKKKKTGRAKRRM) show a composition bias toward basic residues. An N6-succinyllysine modification is found at Lys-125.

In the N-terminal section; belongs to the ubiquitin family. It in the C-terminal section; belongs to the eukaryotic ribosomal protein eS30 family. In terms of assembly, component of the 40S subunit of the ribosome. Post-translationally, FUBI is cleaved from ribosomal protein S30 by the deubiquitinase USP36 before the assembly of ribosomal protein S30 into pre-40S ribosomal particles. FUBI removal from ribosomal protein S30 is a crucial event for the final maturation of pre-40S particles.

It localises to the cytoplasm. The protein resides in the nucleus. In terms of biological role, may have pro-apoptotic activity. Its function is as follows. Component of the 40S subunit of the ribosome. Contributes to the assembly and function of 40S ribosomal subunits. In Homo sapiens (Human), this protein is Ubiquitin-like FUBI-ribosomal protein eS30 fusion protein.